A 79-amino-acid chain; its full sequence is Small ribosomal subunit protein bS18B (79 aa).

Residues 1–11 (MPRPRKADRTP) show a composition bias toward basic and acidic residues. Residues 1–24 (MPRPRKADRTPARQRPNPLDRDGV) form a disordered region.

This sequence belongs to the bacterial ribosomal protein bS18 family. Part of the 30S ribosomal subunit. Forms a tight heterodimer with protein bS6.

Binds as a heterodimer with protein bS6 to the central domain of the 16S rRNA, where it helps stabilize the platform of the 30S subunit. The sequence is that of Small ribosomal subunit protein bS18B from Streptomyces coelicolor (strain ATCC BAA-471 / A3(2) / M145).